We begin with the raw amino-acid sequence, 1399 residues long: DNA-directed RNA polymerase subunit beta' (1399 aa).

Zn(2+)-binding residues include cysteine 70, cysteine 72, cysteine 85, and cysteine 88. Mg(2+) is bound by residues aspartate 460, aspartate 462, and aspartate 464. Zn(2+)-binding residues include cysteine 814, cysteine 888, cysteine 895, and cysteine 898.

It belongs to the RNA polymerase beta' chain family. In terms of assembly, the RNAP catalytic core consists of 2 alpha, 1 beta, 1 beta' and 1 omega subunit. When a sigma factor is associated with the core the holoenzyme is formed, which can initiate transcription. The cofactor is Mg(2+). Requires Zn(2+) as cofactor.

The catalysed reaction is RNA(n) + a ribonucleoside 5'-triphosphate = RNA(n+1) + diphosphate. Its function is as follows. DNA-dependent RNA polymerase catalyzes the transcription of DNA into RNA using the four ribonucleoside triphosphates as substrates. In Pseudomonas syringae pv. syringae (strain B728a), this protein is DNA-directed RNA polymerase subunit beta'.